Reading from the N-terminus, the 328-residue chain is Phosphate acyltransferase (328 aa).

It belongs to the PlsX family. Homodimer. Probably interacts with PlsY.

It localises to the cytoplasm. The enzyme catalyses a fatty acyl-[ACP] + phosphate = an acyl phosphate + holo-[ACP]. It participates in lipid metabolism; phospholipid metabolism. Catalyzes the reversible formation of acyl-phosphate (acyl-PO(4)) from acyl-[acyl-carrier-protein] (acyl-ACP). This enzyme utilizes acyl-ACP as fatty acyl donor, but not acyl-CoA. The polypeptide is Phosphate acyltransferase (Geobacillus thermodenitrificans (strain NG80-2)).